Here is a 579-residue protein sequence, read N- to C-terminus: Glutamine--tRNA ligase (579 aa).

The 'HIGH' region motif lies at 41–51 (PEPNGYLHIGH). ATP is bound by residues 42–44 (EPN) and 48–54 (HIGHAKA). The L-glutamine site is built by Asp-74 and Tyr-218. ATP contacts are provided by residues Thr-237, 285-286 (RL), and 293-295 (MSK). A 'KMSKS' region motif is present at residues 292–296 (VMSKR).

The protein belongs to the class-I aminoacyl-tRNA synthetase family. As to quaternary structure, monomer.

The protein resides in the cytoplasm. The catalysed reaction is tRNA(Gln) + L-glutamine + ATP = L-glutaminyl-tRNA(Gln) + AMP + diphosphate. This chain is Glutamine--tRNA ligase, found in Xanthomonas campestris pv. campestris (strain 8004).